We begin with the raw amino-acid sequence, 273 residues long: Putative inactive beta-glucuronidase protein GUSBP11 (273 aa).

The tract at residues 1-20 is disordered; sequence MTAAETGRGKPRLGGGSGLG.

This sequence belongs to the glycosyl hydrolase 2 family.

The polypeptide is Putative inactive beta-glucuronidase protein GUSBP11 (GUSBP11) (Homo sapiens (Human)).